Here is a 418-residue protein sequence, read N- to C-terminus: Ankyrin repeat and SOCS box protein 6 (418 aa).

6 ANK repeats span residues 65 to 95, 100 to 129, 134 to 164, 168 to 203, 224 to 253, and 258 to 287; these read EGVS…NLNF, TYYT…DINR, HESS…DVNA, NGKT…DVKA, CGDK…DPSE, and ESLT…AYNC. An SOCS box domain is found at 358-413; sequence ALHASLRQLESYPPPLKHLCRVSIRLCLRPWPVDTKVKALPLPDRLKWYLLSAHSD.

Belongs to the ankyrin SOCS box (ASB) family. Binds APS. Identified in a complex with ELOB and ELOC. Interacts with CUL5 and RNF7. Interacts with SQSTM1. Detected in adipocytes.

It is found in the cytoplasm. It functions in the pathway protein modification; protein ubiquitination. Its function is as follows. Probable substrate-recognition component of a SCF-like ECS (Elongin-Cullin-SOCS-box protein) E3 ubiquitin-protein ligase complex which mediates the ubiquitination and subsequent proteasomal degradation of target proteins. May play a role in the regulation of cell proliferation and autophagy by promoting the ubiquitination and degradation of SQSTM1. The chain is Ankyrin repeat and SOCS box protein 6 (Asb6) from Mus musculus (Mouse).